The sequence spans 876 residues: ATPase WRNIP1 (876 aa).

Composition is skewed to low complexity over residues 56–85 (NKSN…TPTK) and 104–175 (NNNN…INNN). The segment at 56 to 175 (NKSNGNNSIN…NNNNNNINNN (120 aa)) is disordered. Residue 240–246 (PGCGKTT) participates in ATP binding. Disordered stretches follow at residues 621-647 (KDRQ…PQQQ), 714-737 (INNK…LNPT), and 833-876 (ETKA…SLDF). Composition is skewed to low complexity over residues 626–647 (SQDQ…PQQQ) and 714–731 (INNK…VNNS). The segment covering 835–849 (KAISSTDTKESVSIN) has biased composition (polar residues). Basic and acidic residues predominate over residues 850 to 863 (DSDKDLTTTHKNEQ).

Belongs to the AAA ATPase family. RarA/MGS1/WRNIP1 subfamily.

It is found in the nucleus. It carries out the reaction ATP + H2O = ADP + phosphate + H(+). Functionally, functions as a modulator for initiation or reinitiation events during DNA polymerase delta-mediated DNA synthesis. Has an intrinsic ATPase activity that functions as a sensor of DNA damage or of arrested replication forks and regulates the extent of DNA synthesis. The protein is ATPase WRNIP1 of Dictyostelium discoideum (Social amoeba).